We begin with the raw amino-acid sequence, 1491 residues long: Membrane-associated guanylate kinase, WW and PDZ domain-containing protein 1 (1491 aa).

A PDZ 1 domain is found at Glu-17 to Gly-105. The Guanylate kinase-like domain maps to Ala-96–Phe-287. Arg-103 to Lys-110 is a binding site for ATP. The tract at residues Ala-236–Ala-267 is disordered. Positions Gly-300–Cys-333 constitute a WW 1 domain. The residue at position 357 (Ser-357) is a Phosphoserine. Residues Leu-359 to Leu-392 form the WW 2 domain. The segment covering Gln-411 to Gln-421 has biased composition (low complexity). A disordered region spans residues Gln-411 to Asn-462. The segment covering Pro-435–Pro-445 has biased composition (pro residues). Residues His-472–Arg-554 form the PDZ 2 domain. The segment covering Gln-586–Gly-600 has biased composition (polar residues). Disordered regions lie at residues Gln-586–Gly-623, Gln-720–Cys-832, and Thr-932–Ser-987. Residues Thr-643 to Arg-721 form the PDZ 3 domain. A phosphoserine mark is found at Ser-730 and Ser-741. The segment covering Gln-742–His-752 has biased composition (low complexity). The segment covering His-756–Val-766 has biased composition (polar residues). Ser-800 bears the Phosphoserine mark. The 83-residue stretch at Ser-813–Pro-895 folds into the PDZ 4 domain. The segment covering Pro-939–Ser-951 has biased composition (polar residues). The 97-residue stretch at Ser-970–Ser-1066 folds into the PDZ 5 domain. The interval Ser-970–Ser-1066 is interaction with FCHSD2. The segment covering Ser-975 to Ser-987 has biased composition (gly residues). Ser-1071 carries the post-translational modification Phosphoserine. Over residues Thr-1112 to Lys-1130 the composition is skewed to polar residues. 2 disordered regions span residues Thr-1112 to Gln-1143 and Asp-1234 to Ile-1491. In terms of domain architecture, PDZ 6 spans Glu-1124–Thr-1206. 3 stretches are compositionally biased toward basic and acidic residues: residues Asp-1278–Ala-1338, Lys-1354–Pro-1396, and Leu-1403–Ile-1491. 2 positions are modified to phosphoserine: Ser-1361 and Ser-1412.

As to quaternary structure, part of a complex composed of AMOTL2, MAGI1 and CDH5, within the complex AMOTL2 acts as a scaffold protein for the interaction of MAGI1 with CDH5. The complex is required for coupling actin fibers to cell junctions in endothelial cells. Interacts through its WW 2 domain with SYNPO and through its PDZ 5 domain with ACTN4. Interacts with cytoplasmic domain of ADGRB1. Interacts via its WW domains with DRPLA. Interacts with ESAM, LRP2 and CXADR. May interact with CTNNB1. Interacts through its PDZ 1 domain with NET1. Interacts with ASIC3 and AMOT. Interacts with FCHSD2. Interacts with IGSF5/JAM4 and through its PDZ 2 and 3 domains with NPHS1 forming a tripartite complex. Interacts with DDN. Interacts with DLL1. Interacts with KCNJ10 and possibly with KCNJ10/KCNJ16 heterodimer; this interaction may facilitate KCNJ10/KCNJ16 potassium channel expression at the basolateral membrane in kidney tubular cells. Interacts with PRRG4 (via cytoplasmic domain). Interacts (via PDZ domain) with RAPGEF2. In terms of tissue distribution, widely expressed with the exception of skeletal muscle. Isoform 1, isoform 2 and isoform 6 are highly expressed in colon, kidney, lung, liver, and pancreas. Isoform 5 is predominantly expressed in brain and heart. Isoform 3 and isoform 4 are highly expressed in pancreas and brain.

The protein resides in the cell junction. It localises to the tight junction. The protein localises to the cell membrane. Plays a role in coupling actin fibers to cell junctions in endothelial cells, via its interaction with AMOTL2 and CDH5. May regulate acid-induced ASIC3 currents by modulating its expression at the cell surface. This is Membrane-associated guanylate kinase, WW and PDZ domain-containing protein 1 (MAGI1) from Homo sapiens (Human).